The sequence spans 423 residues: Carboxypeptidase B2 (423 aa).

The N-terminal stretch at 1–22 (MKLYSLGVLVATVLFCGEHAFA) is a signal peptide. A propeptide spans 23-114 (FQRGQVLSAL…QTSNDTISPR (92 aa)) (activation peptide). N-linked (GlcNAc...) asparagine glycans are attached at residues Asn44, Asn73, Asn85, and Asn108. Positions 122–419 (QYHSLNEIYS…VAVAKIASHV (298 aa)) constitute a Peptidase M14 domain. Cys178 and Cys191 are joined by a disulfide. His181 and Glu184 together coordinate Zn(2+). Substrate contacts are provided by residues 181 to 184 (HARE) and Arg239. The N-linked (GlcNAc...) asparagine glycan is linked to Asn241. Disulfide bonds link Cys250–Cys274 and Cys265–Cys279. Position 256–257 (256–257 (NR)) interacts with substrate. His310 contacts Zn(2+). Residues 311–312 (SY) and Tyr363 contribute to the substrate site. Glu385 (proton donor/acceptor) is an active-site residue.

The protein belongs to the peptidase M14 family. It depends on Zn(2+) as a cofactor.

It localises to the secreted. The catalysed reaction is Release of C-terminal Arg and Lys from a polypeptide.. Its activity is regulated as follows. TAFI/CPB2 is unique among carboxypeptidases in that it spontaneously inactivates with a short half-life, a property that is crucial for its role in controlling blood clot lysis. The zymogen is stabilized by interactions with the activation peptide. Release of the activation peptide increases a dynamic flap mobility and in time this leads to conformational changes that disrupt the catalytic site and expose a cryptic thrombin-cleavage site present at Arg-324. In terms of biological role, cleaves C-terminal arginine or lysine residues from biologically active peptides such as kinins or anaphylatoxins in the circulation thereby regulating their activities. Down-regulates fibrinolysis by removing C-terminal lysine residues from fibrin that has already been partially degraded by plasmin. The chain is Carboxypeptidase B2 (CPB2) from Bos taurus (Bovine).